Reading from the N-terminus, the 331-residue chain is MQSSVTEFLIPRLVNIEQISMTHVKITLEPLERGFGHTLGNALRRILLSSMPGFAVTEVEIDGILHEYSTKEGVQEDIIEILLNLKGLAIRVYGKDQVYLTLVKTGIGVVTAADINHGNDVEIINLDHIICTLTCKNASISMRIKVQCGRGYVPVISRTNVISDNKENYVGKLLVDACYSPVERMIYKVEAARVEKRTDLDKLVIEMETNGTLDPEEAIRRAATILSNQLESFVYLRDIREPEIKEEKPEFDPILLRPVDDLELTVRSANCLKAEMIHYIGDLVQKTEVELLRTPNLGKKSLTEIKDVLAAKNLSLGMNLENWPPDNILDN.

Residues 1–237 (MQSSVTEFLI…NQLESFVYLR (237 aa)) are alpha N-terminal domain (alpha-NTD). Positions 251–331 (FDPILLRPVD…NWPPDNILDN (81 aa)) are alpha C-terminal domain (alpha-CTD).

This sequence belongs to the RNA polymerase alpha chain family. Homodimer. The RNAP catalytic core consists of 2 alpha, 1 beta, 1 beta' and 1 omega subunit. When a sigma factor is associated with the core the holoenzyme is formed, which can initiate transcription.

The catalysed reaction is RNA(n) + a ribonucleoside 5'-triphosphate = RNA(n+1) + diphosphate. DNA-dependent RNA polymerase catalyzes the transcription of DNA into RNA using the four ribonucleoside triphosphates as substrates. In Buchnera aphidicola subsp. Baizongia pistaciae (strain Bp), this protein is DNA-directed RNA polymerase subunit alpha.